Here is a 546-residue protein sequence, read N- to C-terminus: Probable sucrose-6-phosphate hydrolase (546 aa).

Substrate-binding positions include Leu105–Asp108, Gln124, Phe167–Ser168, Arg228–Asp229, and Glu283. Residue Asp108 is part of the active site.

Belongs to the glycosyl hydrolase 32 family.

The protein resides in the cytoplasm. It catalyses the reaction Hydrolysis of terminal non-reducing beta-D-fructofuranoside residues in beta-D-fructofuranosides.. It participates in glycan biosynthesis; sucrose metabolism. Enables the bacterium to metabolize sucrose as a sole carbon source. The chain is Probable sucrose-6-phosphate hydrolase from Vibrio cholerae.